Here is a 433-residue protein sequence, read N- to C-terminus: Glutamate-1-semialdehyde 2,1-aminomutase (433 aa).

Residue lysine 273 is modified to N6-(pyridoxal phosphate)lysine.

This sequence belongs to the class-III pyridoxal-phosphate-dependent aminotransferase family. HemL subfamily. As to quaternary structure, homodimer. Requires pyridoxal 5'-phosphate as cofactor.

The protein localises to the cytoplasm. The enzyme catalyses (S)-4-amino-5-oxopentanoate = 5-aminolevulinate. It participates in porphyrin-containing compound metabolism; protoporphyrin-IX biosynthesis; 5-aminolevulinate from L-glutamyl-tRNA(Glu): step 2/2. Its pathway is porphyrin-containing compound metabolism; chlorophyll biosynthesis. This is Glutamate-1-semialdehyde 2,1-aminomutase (hemL) from Synechocystis sp. (strain ATCC 27184 / PCC 6803 / Kazusa).